A 209-amino-acid chain; its full sequence is Dephospho-CoA kinase (209 aa).

Residues R13–N209 enclose the DPCK domain. A21–T26 serves as a coordination point for ATP.

This sequence belongs to the CoaE family.

The protein localises to the cytoplasm. It catalyses the reaction 3'-dephospho-CoA + ATP = ADP + CoA + H(+). Its pathway is cofactor biosynthesis; coenzyme A biosynthesis; CoA from (R)-pantothenate: step 5/5. Its function is as follows. Catalyzes the phosphorylation of the 3'-hydroxyl group of dephosphocoenzyme A to form coenzyme A. The protein is Dephospho-CoA kinase of Synechococcus elongatus (strain ATCC 33912 / PCC 7942 / FACHB-805) (Anacystis nidulans R2).